A 396-amino-acid chain; its full sequence is Pre-mRNA-splicing regulator WTAP (396 aa).

Methionine 1 is subject to N-acetylmethionine. Phosphoserine is present on serine 14. Low complexity-rich tracts occupy residues 240-257 and 278-291; these read QQQQSQASAPSTSRTTSS and SNGSSSRQRTSGSG. The tract at residues 240 to 396 is disordered; sequence QQQQSQASAP…SSVNVQGAVL (157 aa). Phosphoserine is present on residues serine 297, serine 305, serine 306, and serine 341. Residues 305 to 316 show a composition bias toward low complexity; it reads SSSGNGNKASNS. Residues 340–351 show a composition bias toward polar residues; sequence DSPTGSENSLTH. Threonine 350 is subject to Phosphothreonine. The segment covering 352-368 has biased composition (basic and acidic residues); that stretch reads HSNDTDSSHDPQEEKAV. The segment covering 380–396 has biased composition (polar residues); that stretch reads HVQNGLDSSVNVQGAVL. Phosphoserine is present on serine 388.

This sequence belongs to the fl(2)d family. Component of the WMM complex, a N6-methyltransferase complex composed of a catalytic subcomplex, named MAC, and of an associated subcomplex, named MACOM. The MAC subcomplex is composed of METTL3 and METTL14. The MACOM subcomplex is composed of WTAP, ZC3H13, CBLL1/HAKAI, VIRMA, and, in some cases of RBM15 (RBM15 or RBM15B). Interacts with WT1. Also a component of a MACOM-like complex, named WTAP complex, composed of WTAP, ZC3H13, CBLL1, VIRMA, RBM15, BCLAF1 and THRAP3. Interacts with CPNE4 (via VWFA domain).

The protein resides in the nucleus speckle. The protein localises to the nucleus. It is found in the nucleoplasm. It localises to the cytoplasm. Associated component of the WMM complex, a complex that mediates N6-methyladenosine (m6A) methylation of RNAs, a modification that plays a role in the efficiency of mRNA splicing and RNA processing. Acts as a key regulator of m6A methylation by promoting m6A methylation of mRNAs at the 3'-UTR. Required for accumulation of METTL3 and METTL14 to nuclear speckle. Acts as a mRNA splicing regulator. Regulates G2/M cell-cycle transition by binding to the 3' UTR of CCNA2, which enhances its stability. Impairs WT1 DNA-binding ability and inhibits expression of WT1 target genes. This Mus musculus (Mouse) protein is Pre-mRNA-splicing regulator WTAP.